Consider the following 409-residue polypeptide: MLRKEVIPMKKVVLAYSGGLDTSIIIPWLKENYGYEVIAMAADLGQGEELEPLHEKAIKSGASKLYIEDLQEEFVTDFIYPTLKAGAVYEGKYLLGTSFARPLIAQRLVEIAAKEGAVAIAHGATGKGNDQVRFELAVKALNPDLEIIAPWRIWDIKSREDAIDYAVERGIPVPVTKDRPYSMDRNVWHLSHEGGDLEDPWNEPKKDLYLLGVSPEDAPDEAEYLELDFEQGIPVSLNGEKLGPVQLLETLNEVGGKHGIGIVDMVENRLVGMKSRGVYETPGGTILYTAHQALEHLTLDRLTLHYKEQIALKYAELVYDGVWHSPLREALDAFVDVTQKNVTGTVRLKLYKGNCSLAGVKSPYSLYSEEFATFGRDGVYNQKDAEGFINLFGLPLKVRALMEKKSGLR.

ATP is bound by residues 15–23 (AYSGGLDTS) and Ala42. The L-citrulline site is built by Tyr93 and Ser98. Residue Gly123 participates in ATP binding. Positions 125, 129, and 130 each coordinate L-aspartate. Asn129 lines the L-citrulline pocket. Residues Arg133, Ser182, Ser191, Glu267, and Tyr279 each coordinate L-citrulline.

It belongs to the argininosuccinate synthase family. Type 1 subfamily. Homotetramer.

It is found in the cytoplasm. It carries out the reaction L-citrulline + L-aspartate + ATP = 2-(N(omega)-L-arginino)succinate + AMP + diphosphate + H(+). It participates in amino-acid biosynthesis; L-arginine biosynthesis; L-arginine from L-ornithine and carbamoyl phosphate: step 2/3. The chain is Argininosuccinate synthase from Desulfitobacterium hafniense (strain Y51).